A 96-amino-acid chain; its full sequence is UPF0235 protein YggU (96 aa).

The protein belongs to the UPF0235 family.

The polypeptide is UPF0235 protein YggU (Salmonella typhimurium (strain LT2 / SGSC1412 / ATCC 700720)).